The chain runs to 246 residues: Eukaryotic translation initiation factor 6 (246 aa).

2 positions are modified to phosphoserine; by CK1: Ser-174 and Ser-175.

Belongs to the eIF-6 family. As to quaternary structure, monomer. Associates with the 60S ribosomal subunit. Post-translationally, phosphorylation at Ser-174 and Ser-175 promotes nuclear export.

Its subcellular location is the cytoplasm. The protein localises to the nucleus. It localises to the nucleolus. Functionally, binds to the 60S ribosomal subunit and prevents its association with the 40S ribosomal subunit to form the 80S initiation complex in the cytoplasm. Is also involved in ribosome biogenesis. Associates with pre-60S subunits in the nucleus and is involved in its nuclear export. In Verticillium alfalfae (strain VaMs.102 / ATCC MYA-4576 / FGSC 10136) (Verticillium wilt of alfalfa), this protein is Eukaryotic translation initiation factor 6.